The sequence spans 465 residues: MNKLSCGRKSRVEGGQLAGDEWTRHGSFVNKPTRGWLHPDDKVMGPGVPYLVRYMGCVEVLQSMRALDFNTRTQVTREAISLVCDAVPGAKGAMRRRKTCGRSLNSILGKSNLKFAGMPITLTVSTSSLNLMASDCKQIIANHHMQSISFASGGDPDTAEYVAYVAKDPVNQRACHILECPEGLAQDVISTIGQAFELRFKQYLKNPPKLVTPHDRMAGFDGSAWDEEEEELPDHAYYNDFPGKEPPIGGVVDMRLRDGAAPAVLRQSPNHMGATLPVGQVSGAEQDSRKMQPTLQGRERFPVPCSRPPNRPDLFDDPSYVNVQNLEKSRQPLRAANGQRDIFDMKPFDDALPSAQAIVSMEDQLKREPWYQGKMSRKEAERLLKVNGDFLVRESTTTPGQYVLTGLQCGQPKHLLLVDPEGVVRTKDHRFESVSHLISYHMDNHLPIISAGSELCLQQPVERRQ.

In terms of domain architecture, PID spans Met-44–Glu-227. Positions Glu-228–Pro-369 are CH1. The tract at residues Val-281–Phe-315 is disordered. Positions Trp-370–Val-461 constitute an SH2 domain.

Interacts with grb2. Highly expressed in oocytes and embryo. Also expressed in liver. Detected in ovary, testis and heart and to a lesser extent in liver (at protein level).

Its subcellular location is the cytoplasm. In terms of biological role, implicated in ras-dependent oocyte maturation induced by insulin/IGF1. The chain is SHC-transforming protein 1 (shc1) from Xenopus laevis (African clawed frog).